The sequence spans 143 residues: Glycine cleavage system H protein 1 (143 aa).

In terms of domain architecture, Lipoyl-binding spans 26-107 (IYSVGMASIL…PYSSWIAKLK (82 aa)). The residue at position 67 (K67) is an N6-lipoyllysine.

It belongs to the GcvH family. In terms of assembly, the glycine cleavage system is composed of four proteins: P, T, L and H. (R)-lipoate is required as a cofactor.

Its function is as follows. The glycine cleavage system catalyzes the degradation of glycine. The H protein shuttles the methylamine group of glycine from the P protein to the T protein. The sequence is that of Glycine cleavage system H protein 1 from Aquifex aeolicus (strain VF5).